We begin with the raw amino-acid sequence, 184 residues long: Gastrokine-1 (184 aa).

The first 20 residues, 1-20, serve as a signal peptide directing secretion; that stretch reads MKLTMFVVGLLGLLAAPGFA. The region spanning 54-148 is the BRICHOS domain; sequence NNGWDSWNSL…MCRGIPTYVA (95 aa). A disulfide bridge connects residues Cys-81 and Cys-140.

This sequence belongs to the gastrokine family. As to expression, expressed in the stomach. Highly expressed specifically in surface cells of the antrum mucosa from where it is secreted.

It is found in the secreted. It localises to the cytoplasmic granule. Its subcellular location is the golgi apparatus. Functionally, has mitogenic activity and may be involved in maintaining the integrity of the gastric mucosal epithelium. The polypeptide is Gastrokine-1 (Gkn1) (Mus musculus (Mouse)).